Here is a 310-residue protein sequence, read N- to C-terminus: tRNA dimethylallyltransferase (310 aa).

13 to 20 is an ATP binding site; that stretch reads GPTASGKT. 15-20 contacts substrate; that stretch reads TASGKT. Interaction with substrate tRNA regions lie at residues 38 to 41, 162 to 166, 243 to 248, and 276 to 283; these read DSAL, QRLSR, RCVGYR, and KRQITWLR.

This sequence belongs to the IPP transferase family. In terms of assembly, monomer. Mg(2+) serves as cofactor.

The enzyme catalyses adenosine(37) in tRNA + dimethylallyl diphosphate = N(6)-dimethylallyladenosine(37) in tRNA + diphosphate. In terms of biological role, catalyzes the transfer of a dimethylallyl group onto the adenine at position 37 in tRNAs that read codons beginning with uridine, leading to the formation of N6-(dimethylallyl)adenosine (i(6)A). The polypeptide is tRNA dimethylallyltransferase (Vibrio campbellii (strain ATCC BAA-1116)).